We begin with the raw amino-acid sequence, 527 residues long: Bifunctional purine biosynthesis protein PurH (527 aa).

Residues 1–149 form the MGS-like domain; that stretch reads MASDFLPVHR…KNFARVAVAT (149 aa).

It belongs to the PurH family.

The enzyme catalyses (6R)-10-formyltetrahydrofolate + 5-amino-1-(5-phospho-beta-D-ribosyl)imidazole-4-carboxamide = 5-formamido-1-(5-phospho-D-ribosyl)imidazole-4-carboxamide + (6S)-5,6,7,8-tetrahydrofolate. It catalyses the reaction IMP + H2O = 5-formamido-1-(5-phospho-D-ribosyl)imidazole-4-carboxamide. It participates in purine metabolism; IMP biosynthesis via de novo pathway; 5-formamido-1-(5-phospho-D-ribosyl)imidazole-4-carboxamide from 5-amino-1-(5-phospho-D-ribosyl)imidazole-4-carboxamide (10-formyl THF route): step 1/1. It functions in the pathway purine metabolism; IMP biosynthesis via de novo pathway; IMP from 5-formamido-1-(5-phospho-D-ribosyl)imidazole-4-carboxamide: step 1/1. In Xylella fastidiosa (strain 9a5c), this protein is Bifunctional purine biosynthesis protein PurH.